The sequence spans 127 residues: Ribonuclease P protein component (127 aa).

The protein belongs to the RnpA family. In terms of assembly, consists of a catalytic RNA component (M1 or rnpB) and a protein subunit.

The enzyme catalyses Endonucleolytic cleavage of RNA, removing 5'-extranucleotides from tRNA precursor.. RNaseP catalyzes the removal of the 5'-leader sequence from pre-tRNA to produce the mature 5'-terminus. It can also cleave other RNA substrates such as 4.5S RNA. The protein component plays an auxiliary but essential role in vivo by binding to the 5'-leader sequence and broadening the substrate specificity of the ribozyme. The sequence is that of Ribonuclease P protein component from Synechococcus sp. (strain RCC307).